Here is a 573-residue protein sequence, read N- to C-terminus: MNQTRVFLIFAWLMVAALLWMEWGKDKAAANAPTPIASQAVPAARDPDAAAPAANVPSAQAIPQAGSPAAVPATSTTTATPATTGAAPAITLTSDVLRLKLDGRSVLDAELLQFPQTKDGTEPVKLLTEDAAHPYNATSGWASERSPVPGVGGFRAEQPGTTFELAKGQNTLVVPFVWNGPNGVSIRRIFTLQRGSYAISIKDEVINKSDAAWNGYVFRKLSRVPTILSRGMTNPDSFSFNGATWYSPQEGYERRAFKDYMDDGGLNRQITGGWVALLQHHFFTAWIPQKDQASLYVLAQDGPRDVAELRGPAFTVAPGQSASTEARLWVGPKLVSLLAKEDVKGLDRVVDYSRFSIMAIIGQGLFWVLSHLHSFLHNWGWAIIGLVVLLRLALYPLSAAQYKSGAKMRRFQPRLAQLKERYGDDRQKYQQATMELFKKEKINPMGGCLPLLIQMPIFFALYWVLVESVELRQAPWLGWIQDLTARDPYFILPVLNIAIMWATQKLTPTPGMDPMQAKMMQFMPLVFGVMMAFMPAGLVLYWVVNGGLGLLIQWWMIRQHGEKPSKIIQANAK.

Helical transmembrane passes span 6–26, 355–375, 379–399, 446–466, 488–508, and 524–544; these read VFLI…WGKD, FSIM…LHSF, WGWA…PLSA, GGCL…WVLV, PYFI…KLTP, and PLVF…YWVV.

This sequence belongs to the OXA1/ALB3/YidC family. Type 1 subfamily. As to quaternary structure, interacts with the Sec translocase complex via SecD. Specifically interacts with transmembrane segments of nascent integral membrane proteins during membrane integration.

It is found in the cell inner membrane. In terms of biological role, required for the insertion and/or proper folding and/or complex formation of integral membrane proteins into the membrane. Involved in integration of membrane proteins that insert both dependently and independently of the Sec translocase complex, as well as at least some lipoproteins. Aids folding of multispanning membrane proteins. This chain is Membrane protein insertase YidC, found in Xanthomonas campestris pv. campestris (strain ATCC 33913 / DSM 3586 / NCPPB 528 / LMG 568 / P 25).